We begin with the raw amino-acid sequence, 462 residues long: Toxin CfTX-2 (462 aa).

The signal sequence occupies residues 1-17; it reads MILVSLLPLLFMTGIAS.

This sequence belongs to the jellyfish toxin family. Type I subfamily. In terms of assembly, oligomer. In terms of processing, contains disulfide bonds. Nematocytes.

The protein resides in the secreted. It localises to the nematocyst. Its subcellular location is the target cell membrane. May cause profound effects on the cardiovascular system of anesthetized rats (at 25 ug/kg), since the fraction containing this toxin and CfTX-1 produces an initial increase in mean arterial pressure, followed by cardiovascular collapse in all animals within 1 minute of injection. To note, the same fraction does not induce significant change in heart rate. Has weak hemolytic activity. Is lethal to crayfish. Causes cutaneous inflammation in humans. May act as a pore-forming toxin, disrupting normal transmembrane ion concentration gradients in susceptible cells. The sequence is that of Toxin CfTX-2 from Chironex fleckeri (Australian box jellyfish).